The chain runs to 543 residues: Zinc finger protein 280B (543 aa).

Met-1 carries the N-acetylmethionine modification. Residues 1–10 are compositionally biased toward acidic residues; that stretch reads MEQSCEEEKE. Residues 1-23 are disordered; the sequence is MEQSCEEEKEPEPQKNIQETKQV. Phosphoserine occurs at positions 68 and 70. Residues 105-138 are disordered; sequence SQLESRSTDSPIIIEPLSKPDYRNSSPQVVPNNS. Positions 128–138 are enriched in low complexity; that stretch reads NSSPQVVPNNS. Glycyl lysine isopeptide (Lys-Gly) (interchain with G-Cter in SUMO2) cross-links involve residues Lys-173, Lys-247, and Lys-261. C2H2-type zinc fingers lie at residues 343 to 366, 373 to 396, 432 to 454, and 460 to 483; these read TTCQ…ENVH, TVCK…KDHH, LLCP…YRGH, and HQCS…TQCH. The disordered stretch occupies residues 518-543; the sequence is ASITVSTSDSEPSLPRSKSKISKKSH. The span at 534-543 shows a compositional bias: basic residues; it reads SKSKISKKSH.

The protein localises to the nucleus. Its function is as follows. May function as a transcription factor. In Homo sapiens (Human), this protein is Zinc finger protein 280B (ZNF280B).